The chain runs to 228 residues: L-ribulose-5-phosphate 4-epimerase UlaF (228 aa).

Residues 26–27 (GN), 43–44 (SG), and 72–73 (SS) each bind substrate. Zn(2+) is bound by residues Asp-74, His-93, and His-95. Asp-118 (proton donor/acceptor) is an active-site residue. Position 167 (His-167) interacts with Zn(2+). The active-site Proton donor/acceptor is Tyr-225.

Belongs to the aldolase class II family. AraD/FucA subfamily. The cofactor is Zn(2+).

It carries out the reaction L-ribulose 5-phosphate = D-xylulose 5-phosphate. It participates in cofactor degradation; L-ascorbate degradation; D-xylulose 5-phosphate from L-ascorbate: step 4/4. Catalyzes the isomerization of L-ribulose 5-phosphate to D-xylulose 5-phosphate. Is involved in the anaerobic L-ascorbate utilization. The polypeptide is L-ribulose-5-phosphate 4-epimerase UlaF (Escherichia coli O6:K15:H31 (strain 536 / UPEC)).